Consider the following 137-residue polypeptide: Structural protein A137R (137 aa).

This sequence belongs to the asfivirus A137R family. In terms of assembly, interacts with host TBK1.

The protein resides in the virion. It localises to the host cytoplasm. Plays a role in the inhibition of the host innate immune response. Mechanistically, promotes the autophagy-mediated lysosomal degradation of host TBK1 and affects IRF3 nuclear translocation to block type I IFN production. The polypeptide is Structural protein A137R (Ornithodoros (relapsing fever ticks)).